The primary structure comprises 359 residues: Peptide chain release factor 1 (359 aa).

Gln235 carries the post-translational modification N5-methylglutamine.

It belongs to the prokaryotic/mitochondrial release factor family. Post-translationally, methylated by PrmC. Methylation increases the termination efficiency of RF1.

The protein localises to the cytoplasm. Its function is as follows. Peptide chain release factor 1 directs the termination of translation in response to the peptide chain termination codons UAG and UAA. This chain is Peptide chain release factor 1, found in Aromatoleum aromaticum (strain DSM 19018 / LMG 30748 / EbN1) (Azoarcus sp. (strain EbN1)).